A 557-amino-acid polypeptide reads, in one-letter code: Leucine-rich glioma-inactivated protein 1 (557 aa).

The signal sequence occupies residues 1–34 (MESESSRRMGNACIPLKRIAYFLCLFSVVLLTEG). One can recognise an LRRNT domain in the interval 35–72 (KKPAKPKCPAVCTCSKDNALCENARSIPRTVPPDVISL). LRR repeat units follow at residues 92–113 (SLQL…AFIG), 116–137 (HLEY…TFRG), and 140–161 (SLIH…IFKG). Residues 173-223 (NAFNCDCKLKWLVEWLGHTNATVEDIYCEGPPEYKKRKINSLSPKDFDCII) form the LRRCT domain. Asparagine 192 carries N-linked (GlcNAc...) asparagine glycosylation. EAR repeat units follow at residues 225 to 267 (EFAK…EWDH), 271 to 313 (TFRN…KRDG), 317 to 364 (KFIK…KWNG), 366 to 415 (GFYS…QWSK), 419 to 462 (LFTN…KWGG), 464 to 506 (SFQD…NWDA), and 510 to 552 (KFVK…KHVI). The N-linked (GlcNAc...) asparagine glycan is linked to asparagine 277. Residue asparagine 422 is glycosylated (N-linked (GlcNAc...) asparagine).

As to quaternary structure, oligomer. Interacts with KCNA1 within a complex containing KCNA1, KCNA4 and KCNAB1. Part of a complex containing ADAM22, DLG4/PSD95 and CACNG2 (stargazin). Can bind to ADAM11 and ADAM23. Glycosylated. In terms of tissue distribution, expressed in the brain (at protein level). Expressed in cerebellar cortex basket cell terminals (at protein level). Highly expressed in the dentate gyrus and CA3 field of the hippocampus.

It is found in the secreted. The protein localises to the synapse. Its subcellular location is the cytoplasm. The protein resides in the golgi apparatus. It localises to the endoplasmic reticulum. Functionally, regulates voltage-gated potassium channels assembled from KCNA1, KCNA4 and KCNAB1. It slows down channel inactivation by precluding channel closure mediated by the KCNAB1 subunit. Ligand for ADAM22 that positively regulates synaptic transmission mediated by AMPA-type glutamate receptors. Plays a role in suppressing the production of MMP1/3 through the phosphatidylinositol 3-kinase/ERK pathway. The protein is Leucine-rich glioma-inactivated protein 1 of Mus musculus (Mouse).